A 372-amino-acid polypeptide reads, in one-letter code: MTVAQPLVLLAAGGTGGHLFPAEALALRLRDRGIRVVLASDGRVEALSGGFPASEIVSIPSATPSGRSPLARGAAFLTLGRGFAAAIRAVRRLNPAVVVGFGGYPTVPPLLAAQMLRVPTLLHEQNAVMGRANGFLARGASVIATGFSEVRGVPARAGARRVHTGNPVRPAVLAAADTPYPALSPDGPLNLLAFGGSQGARVMSEVVPEAVARLPAPLRARLHVVQQARAEDLARAEAIYGRAGLASASVAPFFKDLPARMAAAHLVVARSGASTVAELAVIGRPAILVPLPGSLDQDQAANAAVLGAAGAAFPRPQTDFIPERLAADLEALFGAPERLAAAAAAARRTGIPDAAERLAALVVETAIAASTR.

Residues 15–17, asparagine 126, arginine 169, serine 197, and glutamine 299 each bind UDP-N-acetyl-alpha-D-glucosamine; that span reads TGG.

Belongs to the glycosyltransferase 28 family. MurG subfamily.

The protein resides in the cell inner membrane. It carries out the reaction di-trans,octa-cis-undecaprenyl diphospho-N-acetyl-alpha-D-muramoyl-L-alanyl-D-glutamyl-meso-2,6-diaminopimeloyl-D-alanyl-D-alanine + UDP-N-acetyl-alpha-D-glucosamine = di-trans,octa-cis-undecaprenyl diphospho-[N-acetyl-alpha-D-glucosaminyl-(1-&gt;4)]-N-acetyl-alpha-D-muramoyl-L-alanyl-D-glutamyl-meso-2,6-diaminopimeloyl-D-alanyl-D-alanine + UDP + H(+). Its pathway is cell wall biogenesis; peptidoglycan biosynthesis. Cell wall formation. Catalyzes the transfer of a GlcNAc subunit on undecaprenyl-pyrophosphoryl-MurNAc-pentapeptide (lipid intermediate I) to form undecaprenyl-pyrophosphoryl-MurNAc-(pentapeptide)GlcNAc (lipid intermediate II). This Methylobacterium sp. (strain 4-46) protein is UDP-N-acetylglucosamine--N-acetylmuramyl-(pentapeptide) pyrophosphoryl-undecaprenol N-acetylglucosamine transferase.